A 181-amino-acid chain; its full sequence is Cytidylate kinase (181 aa).

ATP is bound at residue 7 to 15 (GPPGSGTTS).

The protein belongs to the cytidylate kinase family. Type 2 subfamily.

The protein resides in the cytoplasm. The enzyme catalyses CMP + ATP = CDP + ADP. It carries out the reaction dCMP + ATP = dCDP + ADP. In Methanoculleus marisnigri (strain ATCC 35101 / DSM 1498 / JR1), this protein is Cytidylate kinase.